Here is a 456-residue protein sequence, read N- to C-terminus: Trigger factor (456 aa).

The PPIase FKBP-type domain occupies 192 to 277 (GDTVVIDFVG…IHEVKTKEVP (86 aa)).

It belongs to the FKBP-type PPIase family. Tig subfamily.

Its subcellular location is the cytoplasm. It carries out the reaction [protein]-peptidylproline (omega=180) = [protein]-peptidylproline (omega=0). Involved in protein export. Acts as a chaperone by maintaining the newly synthesized protein in an open conformation. Functions as a peptidyl-prolyl cis-trans isomerase. This chain is Trigger factor, found in Streptococcus pyogenes serotype M4 (strain MGAS10750).